We begin with the raw amino-acid sequence, 601 residues long: Deoxyhypusine synthase (601 aa).

NAD(+) contacts are provided by residues 109 to 113 (ANLMG) and 184 to 186 (SGG). 189-190 (EH) serves as a coordination point for spermidine. A disordered region spans residues 210 to 242 (GHVSSTVSSEATAPPKGLQQRAEKPLGTRAAAG). Over residues 211–220 (HVSSTVSSEA) the composition is skewed to polar residues. Position 398 (D398) interacts with NAD(+). Residues 411-451 (PAARPAHRKGGPVADENAGNSKELKRSRKASSSSSTSATAV) are disordered. Residues 440–451 (ASSSSSTSATAV) show a composition bias toward low complexity. Residue G489 coordinates NAD(+). Residue H494 coordinates spermidine. 514–515 (NG) serves as a coordination point for NAD(+). Spermidine-binding positions include 520–522 (GSD) and 529–535 (EALSWGK). K535 acts as the Nucleophile in catalysis. Residue 548-549 (EV) participates in NAD(+) binding. Residues 568–601 (RRATDDAQPRRKRSSRGARPPQDVSGHSHLCRGE) are disordered.

This sequence belongs to the deoxyhypusine synthase family. Homodimer. NAD(+) serves as cofactor.

The catalysed reaction is [eIF5A protein]-L-lysine + spermidine = [eIF5A protein]-deoxyhypusine + propane-1,3-diamine. Its pathway is protein modification; eIF5A hypusination. Its activity is regulated as follows. N1-guanyl-1,7-diaminoheptane has a small inhibitory effect on activity. Catalyzes the NAD-dependent oxidative cleavage of spermidine and the subsequent transfer of the butylamine moiety of spermidine to the epsilon-amino group of a specific lysine residue of the eIF-5A precursor protein to form the intermediate deoxyhypusine residue. The polypeptide is Deoxyhypusine synthase (Leishmania donovani).